The following is a 319-amino-acid chain: Peroxidase 13 (319 aa).

A signal peptide spans 1–22; the sequence is MITIALFLVLLYFHDQLGYSAA. 4 disulfide bridges follow: C33-C111, C66-C71, C117-C315, and C196-C222. H64 functions as the Proton acceptor in the catalytic mechanism. Ca(2+) contacts are provided by D65, V68, G70, D72, and S74. P158 contributes to the substrate binding site. H189 serves as a coordination point for heme b. T190 contributes to the Ca(2+) binding site. 3 residues coordinate Ca(2+): D235, S238, and D243. N280 carries N-linked (GlcNAc...) asparagine glycosylation.

This sequence belongs to the peroxidase family. Classical plant (class III) peroxidase subfamily. Heme b is required as a cofactor. Requires Ca(2+) as cofactor.

It is found in the secreted. It carries out the reaction 2 a phenolic donor + H2O2 = 2 a phenolic radical donor + 2 H2O. Removal of H(2)O(2), oxidation of toxic reductants, biosynthesis and degradation of lignin, suberization, auxin catabolism, response to environmental stresses such as wounding, pathogen attack and oxidative stress. These functions might be dependent on each isozyme/isoform in each plant tissue. The sequence is that of Peroxidase 13 (PER13) from Arabidopsis thaliana (Mouse-ear cress).